The primary structure comprises 75 residues: Small ribosomal subunit protein bS16c (75 aa).

This sequence belongs to the bacterial ribosomal protein bS16 family.

Its subcellular location is the plastid. It is found in the chloroplast. This chain is Small ribosomal subunit protein bS16c, found in Cyanidium caldarium (Red alga).